The sequence spans 325 residues: Lactonase drp35 (325 aa).

Ca(2+) contacts are provided by Glu-46, Ser-108, Gly-110, Glu-128, Thr-131, Tyr-133, Asp-136, Asn-183, Asp-234, and Ser-235. Asp-234 serves as the catalytic Proton donor.

This sequence belongs to the SMP-30/CGR1 family. Ca(2+) is required as a cofactor.

The protein resides in the cytoplasm. Functionally, exhibits lactonase activity. Acts in cells with perturbed membrane integrity and is possibly related to the membrane homeostasis. In Staphylococcus haemolyticus (strain JCSC1435), this protein is Lactonase drp35 (drp35).